We begin with the raw amino-acid sequence, 263 residues long: CRISPR-associated protein Cas5 2 (263 aa).

The protein belongs to the CRISPR-associated protein Cas5 family. Subtype I-A/Apern subfamily. In terms of assembly, part of the aCascade ribonucleoprotein complex, minimally composed of Csa2 and Cas5a, which binds crRNA. Other possible components of aCascade in strain P1 are Cas6b (SSO1437) and Csa5 (SSO1443), while SSO1399, Cas5b (SSO1400) and SSO1401 have sometimes been seen weakly associated. Csa2 is probably the major RNA-binding subunit. The Csa2-Cas5a-crRNA complex also binds target DNA homologous to crRNA, probably forming an R-loop. Purified aCascade forms a filament about 6 nm in width.

Its function is as follows. CRISPR (clustered regularly interspaced short palindromic repeat) is an adaptive immune system that provides protection against mobile genetic elements (viruses, transposable elements and conjugative plasmids). CRISPR clusters contain spacers, sequences complementary to antecedent mobile elements, and target invading nucleic acids. CRISPR clusters are transcribed and processed into CRISPR RNA (crRNA). The chain is CRISPR-associated protein Cas5 2 (cas5b) from Saccharolobus solfataricus (strain ATCC 35092 / DSM 1617 / JCM 11322 / P2) (Sulfolobus solfataricus).